Consider the following 587-residue polypeptide: 5-aminolevulinate synthase, erythroid-specific, mitochondrial (587 aa).

The transit peptide at 1–49 directs the protein to the mitochondrion; sequence MVAAAMLLRSCPVLSQGPTGLLGKVAKTYQFLFSIGRCPILATQGPTCS. R163 contacts succinyl-CoA. Pyridoxal 5'-phosphate-binding residues include C258 and F259. Residues S280 and K299 each contribute to the succinyl-CoA site. Pyridoxal 5'-phosphate contacts are provided by S332, H360, and T388. K391 is a catalytic residue. Residue K391 is modified to N6-(pyridoxal phosphate)lysine. Residues T420 and T421 each contribute to the pyridoxal 5'-phosphate site. T508 is a succinyl-CoA binding site.

It belongs to the class-II pyridoxal-phosphate-dependent aminotransferase family. In terms of assembly, homodimer. Interacts with SUCLA2. Pyridoxal 5'-phosphate is required as a cofactor. As to expression, predomnantly expressed in erythroid cells.

The protein resides in the mitochondrion inner membrane. It is found in the mitochondrion. It carries out the reaction succinyl-CoA + glycine + H(+) = 5-aminolevulinate + CO2 + CoA. The protein operates within porphyrin-containing compound metabolism; protoporphyrin-IX biosynthesis; 5-aminolevulinate from glycine: step 1/1. In terms of biological role, catalyzes the pyridoxal 5'-phosphate (PLP)-dependent condensation of succinyl-CoA and glycine to form aminolevulinic acid (ALA), with CoA and CO2 as by-products. Contributes significantly to heme formation during erythropoiesis. The sequence is that of 5-aminolevulinate synthase, erythroid-specific, mitochondrial (Alas2) from Mus musculus (Mouse).